Consider the following 90-residue polypeptide: Probable Fe(2+)-trafficking protein (90 aa).

It belongs to the Fe(2+)-trafficking protein family.

Could be a mediator in iron transactions between iron acquisition and iron-requiring processes, such as synthesis and/or repair of Fe-S clusters in biosynthetic enzymes. This Vibrio vulnificus (strain CMCP6) protein is Probable Fe(2+)-trafficking protein.